The chain runs to 283 residues: Acetylglutamate kinase (283 aa).

Substrate is bound by residues 63–64, arginine 85, and asparagine 178; that span reads GG.

The protein belongs to the acetylglutamate kinase family. ArgB subfamily.

Its subcellular location is the cytoplasm. The catalysed reaction is N-acetyl-L-glutamate + ATP = N-acetyl-L-glutamyl 5-phosphate + ADP. Its pathway is amino-acid biosynthesis; L-arginine biosynthesis; N(2)-acetyl-L-ornithine from L-glutamate: step 2/4. Functionally, catalyzes the ATP-dependent phosphorylation of N-acetyl-L-glutamate. In Prochlorococcus marinus (strain MIT 9312), this protein is Acetylglutamate kinase.